A 145-amino-acid polypeptide reads, in one-letter code: D-aminoacyl-tRNA deacylase (145 aa).

The Gly-cisPro motif, important for rejection of L-amino acids signature appears at 137-138; the sequence is GP.

It belongs to the DTD family. In terms of assembly, homodimer.

The protein localises to the cytoplasm. It carries out the reaction glycyl-tRNA(Ala) + H2O = tRNA(Ala) + glycine + H(+). It catalyses the reaction a D-aminoacyl-tRNA + H2O = a tRNA + a D-alpha-amino acid + H(+). Its function is as follows. An aminoacyl-tRNA editing enzyme that deacylates mischarged D-aminoacyl-tRNAs. Also deacylates mischarged glycyl-tRNA(Ala), protecting cells against glycine mischarging by AlaRS. Acts via tRNA-based rather than protein-based catalysis; rejects L-amino acids rather than detecting D-amino acids in the active site. By recycling D-aminoacyl-tRNA to D-amino acids and free tRNA molecules, this enzyme counteracts the toxicity associated with the formation of D-aminoacyl-tRNA entities in vivo and helps enforce protein L-homochirality. In Lactobacillus delbrueckii subsp. bulgaricus (strain ATCC 11842 / DSM 20081 / BCRC 10696 / JCM 1002 / NBRC 13953 / NCIMB 11778 / NCTC 12712 / WDCM 00102 / Lb 14), this protein is D-aminoacyl-tRNA deacylase.